We begin with the raw amino-acid sequence, 264 residues long: Gap junction beta-1 protein (264 aa).

The Cytoplasmic portion of the chain corresponds to 1 to 22 (MNWAGLYAILSGVNRHSTSIGR). The helical transmembrane segment at 23–45 (IWLSVVFIFRIMVLVAAAESVWG) threads the bilayer. At 46–75 (DEKSAFTCNTQQPGCNSVCYDHFFPISHIR) the chain is on the extracellular side. Residues 76–98 (LWALQLIIVSTPALLVAMHVAHL) traverse the membrane as a helical segment. Over 99–130 (QHQEKKELRLSRHVKDQELAEVKKHKVKISGT) the chain is Cytoplasmic. The chain crosses the membrane as a helical span at residues 131-153 (LWWTYISSVFFRIIFEAAFMYIF). The Extracellular segment spans residues 154–191 (YLIYPGYSMIRLLKCDAYPCPNTVDCFVSRPTEKTIFT). The helical transmembrane segment at 192–214 (VFMLVASGVCIVLNVAEVFFLIA) threads the bilayer. Residues 215–264 (QACTRRARRHRDSGSISKEHQQNEMNLLITGGSIIKRSAGQEKGDHCSTS) are Cytoplasmic-facing.

This sequence belongs to the connexin family. Beta-type (group I) subfamily. In terms of assembly, a connexon is composed of a hexamer of connexins. Lung, liver, intestines, stomach and kidney.

The protein localises to the cell membrane. The protein resides in the cell junction. Its subcellular location is the gap junction. One gap junction consists of a cluster of closely packed pairs of transmembrane channels, the connexons, through which materials of low MW diffuse from one cell to a neighboring cell. The sequence is that of Gap junction beta-1 protein (gjb1) from Xenopus laevis (African clawed frog).